The primary structure comprises 120 residues: Ribonuclease P protein component (120 aa).

Belongs to the RnpA family. As to quaternary structure, consists of a catalytic RNA component (M1 or rnpB) and a protein subunit.

The enzyme catalyses Endonucleolytic cleavage of RNA, removing 5'-extranucleotides from tRNA precursor.. Functionally, RNaseP catalyzes the removal of the 5'-leader sequence from pre-tRNA to produce the mature 5'-terminus. It can also cleave other RNA substrates such as 4.5S RNA. The protein component plays an auxiliary but essential role in vivo by binding to the 5'-leader sequence and broadening the substrate specificity of the ribozyme. In Azoarcus sp. (strain BH72), this protein is Ribonuclease P protein component.